A 279-amino-acid polypeptide reads, in one-letter code: 3-methyl-2-oxobutanoate hydroxymethyltransferase (279 aa).

2 residues coordinate Mg(2+): Asp43 and Asp82. 3-methyl-2-oxobutanoate contacts are provided by residues 43–44 (DS), Asp82, and Lys112. Glu114 serves as a coordination point for Mg(2+). Glu181 (proton acceptor) is an active-site residue.

This sequence belongs to the PanB family. Homodecamer; pentamer of dimers. It depends on Mg(2+) as a cofactor.

It is found in the cytoplasm. It carries out the reaction 3-methyl-2-oxobutanoate + (6R)-5,10-methylene-5,6,7,8-tetrahydrofolate + H2O = 2-dehydropantoate + (6S)-5,6,7,8-tetrahydrofolate. It functions in the pathway cofactor biosynthesis; (R)-pantothenate biosynthesis; (R)-pantoate from 3-methyl-2-oxobutanoate: step 1/2. Its function is as follows. Catalyzes the reversible reaction in which hydroxymethyl group from 5,10-methylenetetrahydrofolate is transferred onto alpha-ketoisovalerate to form ketopantoate. The protein is 3-methyl-2-oxobutanoate hydroxymethyltransferase of Geobacillus kaustophilus (strain HTA426).